The primary structure comprises 154 residues: SsrA-binding protein (154 aa).

A disordered region spans residues 134 to 154 (QREDLKRRAEDRDTQRELARF).

Belongs to the SmpB family.

It is found in the cytoplasm. Functionally, required for rescue of stalled ribosomes mediated by trans-translation. Binds to transfer-messenger RNA (tmRNA), required for stable association of tmRNA with ribosomes. tmRNA and SmpB together mimic tRNA shape, replacing the anticodon stem-loop with SmpB. tmRNA is encoded by the ssrA gene; the 2 termini fold to resemble tRNA(Ala) and it encodes a 'tag peptide', a short internal open reading frame. During trans-translation Ala-aminoacylated tmRNA acts like a tRNA, entering the A-site of stalled ribosomes, displacing the stalled mRNA. The ribosome then switches to translate the ORF on the tmRNA; the nascent peptide is terminated with the 'tag peptide' encoded by the tmRNA and targeted for degradation. The ribosome is freed to recommence translation, which seems to be the essential function of trans-translation. This is SsrA-binding protein from Nitratidesulfovibrio vulgaris (strain ATCC 29579 / DSM 644 / CCUG 34227 / NCIMB 8303 / VKM B-1760 / Hildenborough) (Desulfovibrio vulgaris).